The primary structure comprises 685 residues: Stromal interaction molecule 1 (685 aa).

Positions 1–22 are cleaved as a signal peptide; the sequence is MDVCARLALWLLWGLLLHQGQS. Over 23–213 the chain is Extracellular; the sequence is LSHSHSEKNT…LLTRHNHLKD (191 aa). Positions 24 to 43 are disordered; it reads SHSHSEKNTGASSGATSEES. The segment covering 32 to 41 has biased composition (low complexity); that stretch reads TGASSGATSE. EF-hand domains lie at 64-97 and 102-126; these read SFEAVRNIHKLMDDDANGDVDVEESDEFLREDLN and TVKHSTFHGEDKLISVEDLWKAWKS. D76, D78, N80, D82, and E87 together coordinate Ca(2+). N131 and N171 each carry an N-linked (GlcNAc...) asparagine glycan. Positions 132–200 constitute an SAM domain; that stretch reads WTVDEVIQWL…QLKALDTVLF (69 aa). Residues 214–234 traverse the membrane as a helical segment; that stretch reads FMLVVSIVIGVGGCWFAYIQN. Topologically, residues 235–685 are cytoplasmic; that stretch reads RYSKEHMKKM…LKIFKKPLKK (451 aa). The stretch at 248-442 forms a coiled coil; that stretch reads LEGLHRAEQS…IEILCGFQIV (195 aa). A Phosphoserine modification is found at S257. Residues 344–442 form an SOAR/CAD region; it reads PEALQKWLQL…IEILCGFQIV (99 aa). The interval 475-483 is contributes to fast Ca(2+)-dependent inactivation of CRAC channels; the sequence is DDVDDMDEE. Residues 490 to 499 show a composition bias toward low complexity; the sequence is MQSPSLQSSV. The disordered stretch occupies residues 490 to 541; the sequence is MQSPSLQSSVRQRLTEPQLGLGSQRDLTHSDSESSLHMSDRQRVAPKPPQMG. T504 is subject to Phosphothreonine. S512 carries the post-translational modification Phosphoserine. Residues 515-532 are compositionally biased toward basic and acidic residues; the sequence is DLTHSDSESSLHMSDRQR. The residue at position 517 (T517) is a Phosphothreonine. S519, S521, S523, S524, S567, S575, S602, S608, S618, S621, and S628 each carry phosphoserine. The segment at 596-685 is disordered; it reads LMELNPSVPP…LKIFKKPLKK (90 aa). Residues 608 to 620 show a composition bias toward low complexity; the sequence is SPLLDSSHSLSPS. Positions 642-645 match the Microtubule tip localization signal motif; it reads TRIP. Over residues 655-666 the composition is skewed to acidic residues; it reads EEDNGSIGEETD. S660 carries the phosphoserine modification. Phosphothreonine is present on T665. The residue at position 668 (S668) is a Phosphoserine. Residues 670-685 are compositionally biased toward basic residues; that stretch reads GRKKFPLKIFKKPLKK. Residues 672–685 are required for generation of inwardly rectifying CRAC currents; sequence KKFPLKIFKKPLKK.

As to quaternary structure, monomer in the presence of Ca(2+). It oligomerizes in absence of Ca(2+). Forms homooligomers and heterooligomers with STIM2. Interacts with pore-forming subunits of CRAC channels, ORAI1, ORAI2 and ORAI3; this interaction is potentiated upon Ca(2+) store depletion. Interacts (via the transmembrane region and the SOAR/CAD domain) with SPPL3; the interaction promotes the binding of STIM1 to ORAI1. Interacts with ORAI1. Interacts with MAPRE1; probably required for targeting to the growing microtubule plus ends. Interacts with CRACR2A/EFCAB4B; the interaction is direct and takes place in absence of Ca(2+). Forms a complex with CRACR2A/EFCAB4B and ORAI1 at low concentration of Ca(2+), the complex dissociates at elevated Ca(2+) concentrations. Interacts with SARAF, promoting a slow inactivation of STIM1-dependent SOCE activity, possibly by facilitating the deoligomerization of STIM1. Interacts with EFHB; the interaction takes place upon Ca(2+)-store depletion and inhibits the association with SARAF. Interacts with ASPH. Interacts with SLC35G1; intracellular Ca(2+)-dependent. May interact with ATP1A1, ATP2A2, ATP2B1, ATP2B4, KPNB1 and XPO1; through SLC35G1. Interacts with STIMATE, promoting STIM1 conformational switch. Interacts with TMEM178A. Interacts with CASQ1 (via C-terminal end and preferentially with the monomeric form); this interaction increases in response to a depletion of intracellular Ca(2+), decreases both STIM1 aggregation and clustering, interaction of STIM1 with ORAI1 and store-operated Ca(2+) entry (SOCE) activity. Interacts with ADCY8. Interacts with TMEM203. In terms of processing, glycosylation is required for cell surface expression. Phosphorylated predominantly on Ser residues. Expressed in maturation-stage ameloblasts (at protein level). Expressed in all tissues examined and in many cell types, including bone marrow stroma, fibroblast, B-cell precursors, lymphoma and erythroleukemia.

The protein localises to the cell membrane. Its subcellular location is the endoplasmic reticulum membrane. It is found in the sarcoplasmic reticulum. The protein resides in the cytoplasm. It localises to the cytoskeleton. Acts as a Ca(2+) sensor that gates two major inward rectifying Ca(2+) channels at the plasma membrane: Ca(2+) release-activated Ca(2+) (CRAC) channels and arachidonate-regulated Ca(2+)-selective (ARC) channels. Plays a role in mediating store-operated Ca(2+) entry (SOCE), a Ca(2+) influx following depletion of intracellular Ca(2+) stores. Upon Ca(2+) depletion, translocates from the endoplasmic reticulum to the plasma membrane where it activates CRAC channel pore-forming subunits ORA1, ORA2 and ORAI3 to generate sustained and oscillatory Ca(2+) entry. Involved in enamel formation. The polypeptide is Stromal interaction molecule 1 (Stim1) (Mus musculus (Mouse)).